Consider the following 661-residue polypeptide: Bifunctional polymyxin resistance protein ArnA (661 aa).

Residues 1-304 form a formyltransferase ArnAFT region; it reads MKAVVFAYHD…ALGLVSGAVI (304 aa). H104 (proton donor; for formyltransferase activity) is an active-site residue. (6R)-10-formyltetrahydrofolate contacts are provided by residues R114 and 136-140; that span reads VNRAD. A dehydrogenase ArnADH region spans residues 314 to 661; the sequence is RRTRVLILGV…TVELVDDKNP (348 aa). NAD(+) contacts are provided by residues D347 and 368 to 369; that span reads DI. UDP-alpha-D-glucuronate-binding positions include A393, Y398, and 432–433; that span reads TS. E434 (proton acceptor; for decarboxylase activity) is an active-site residue. Residues R460, N492, 526–535, and Y613 contribute to the UDP-alpha-D-glucuronate site; that span reads KLIEGGKQKR. The active-site Proton donor; for decarboxylase activity is the R619.

The protein in the N-terminal section; belongs to the Fmt family. UDP-L-Ara4N formyltransferase subfamily. This sequence in the C-terminal section; belongs to the NAD(P)-dependent epimerase/dehydratase family. UDP-glucuronic acid decarboxylase subfamily. Homohexamer, formed by a dimer of trimers.

It carries out the reaction UDP-alpha-D-glucuronate + NAD(+) = UDP-beta-L-threo-pentopyranos-4-ulose + CO2 + NADH. The catalysed reaction is UDP-4-amino-4-deoxy-beta-L-arabinose + (6R)-10-formyltetrahydrofolate = UDP-4-deoxy-4-formamido-beta-L-arabinose + (6S)-5,6,7,8-tetrahydrofolate + H(+). It functions in the pathway nucleotide-sugar biosynthesis; UDP-4-deoxy-4-formamido-beta-L-arabinose biosynthesis; UDP-4-deoxy-4-formamido-beta-L-arabinose from UDP-alpha-D-glucuronate: step 1/3. The protein operates within nucleotide-sugar biosynthesis; UDP-4-deoxy-4-formamido-beta-L-arabinose biosynthesis; UDP-4-deoxy-4-formamido-beta-L-arabinose from UDP-alpha-D-glucuronate: step 3/3. Its pathway is bacterial outer membrane biogenesis; lipopolysaccharide biosynthesis. Bifunctional enzyme that catalyzes the oxidative decarboxylation of UDP-glucuronic acid (UDP-GlcUA) to UDP-4-keto-arabinose (UDP-Ara4O) and the addition of a formyl group to UDP-4-amino-4-deoxy-L-arabinose (UDP-L-Ara4N) to form UDP-L-4-formamido-arabinose (UDP-L-Ara4FN). The modified arabinose is attached to lipid A and is required for resistance to polymyxin and cationic antimicrobial peptides. The protein is Bifunctional polymyxin resistance protein ArnA of Klebsiella pneumoniae subsp. pneumoniae (strain ATCC 700721 / MGH 78578).